A 150-amino-acid polypeptide reads, in one-letter code: Endoribonuclease YbeY (150 aa).

H112, H116, and H122 together coordinate Zn(2+).

It belongs to the endoribonuclease YbeY family. It depends on Zn(2+) as a cofactor.

It is found in the cytoplasm. Functionally, single strand-specific metallo-endoribonuclease involved in late-stage 70S ribosome quality control and in maturation of the 3' terminus of the 16S rRNA. In Geobacter metallireducens (strain ATCC 53774 / DSM 7210 / GS-15), this protein is Endoribonuclease YbeY.